A 506-amino-acid polypeptide reads, in one-letter code: Lysine--tRNA ligase (506 aa).

2 residues coordinate Mg(2+): Glu-416 and Glu-423.

Belongs to the class-II aminoacyl-tRNA synthetase family. Homodimer. Mg(2+) serves as cofactor.

The protein resides in the cytoplasm. It carries out the reaction tRNA(Lys) + L-lysine + ATP = L-lysyl-tRNA(Lys) + AMP + diphosphate. In Baumannia cicadellinicola subsp. Homalodisca coagulata, this protein is Lysine--tRNA ligase.